The chain runs to 423 residues: Gamma-glutamyl phosphate reductase (423 aa).

This sequence belongs to the gamma-glutamyl phosphate reductase family.

The protein localises to the cytoplasm. The catalysed reaction is L-glutamate 5-semialdehyde + phosphate + NADP(+) = L-glutamyl 5-phosphate + NADPH + H(+). It participates in amino-acid biosynthesis; L-proline biosynthesis; L-glutamate 5-semialdehyde from L-glutamate: step 2/2. In terms of biological role, catalyzes the NADPH-dependent reduction of L-glutamate 5-phosphate into L-glutamate 5-semialdehyde and phosphate. The product spontaneously undergoes cyclization to form 1-pyrroline-5-carboxylate. The chain is Gamma-glutamyl phosphate reductase from Paraburkholderia phytofirmans (strain DSM 17436 / LMG 22146 / PsJN) (Burkholderia phytofirmans).